A 503-amino-acid polypeptide reads, in one-letter code: Arabinose import ATP-binding protein AraG (503 aa).

ABC transporter domains follow at residues 5–240 and 253–497; these read LRFD…MVGR and LGDV…LPQG. 37–44 contributes to the ATP binding site; sequence GENGAGKS.

Belongs to the ABC transporter superfamily. Arabinose importer (TC 3.A.1.2.2) family. The complex is composed of two ATP-binding proteins (AraG), two transmembrane proteins (AraH) and a solute-binding protein (AraF).

Its subcellular location is the cell inner membrane. The enzyme catalyses L-arabinose(out) + ATP + H2O = L-arabinose(in) + ADP + phosphate + H(+). Functionally, part of the ABC transporter complex AraFGH involved in arabinose import. Responsible for energy coupling to the transport system. The sequence is that of Arabinose import ATP-binding protein AraG from Burkholderia pseudomallei (strain 1710b).